A 520-amino-acid polypeptide reads, in one-letter code: Alkaline nuclease (520 aa).

Belongs to the herpesviridae alkaline nuclease family. As to quaternary structure, interacts with major DNA-binding protein; this interaction increases the nuclease processivity of the alkaline exonuclease.

The protein localises to the host nucleus. It is found in the host cytoplasm. Plays a role in processing non linear or branched viral DNA intermediates in order to promote the production of mature packaged unit-length linear progeny viral DNA molecules. Exhibits endonuclease and exonuclease activities and accepts both double-stranded and single-stranded DNA as substrate. Exonuclease digestion of DNA is in the 5'-&gt; 3' direction and the products are 5'-monophosphate nucleosides. Additionally, forms a recombinase with the major DNA-binding protein, which displays strand exchange activity. In Psittacid herpesvirus 1 (isolate Amazon parrot/-/97-0001/1997) (PsHV-1), this protein is Alkaline nuclease (UL12).